A 238-amino-acid chain; its full sequence is Cysteine-rich venom protein pseudecin (238 aa).

A signal peptide spans 1–19 (MIAFIVLLSLAAVLQQSSG). A propeptide spanning residues 20–28 (TVDFASESS) is cleaved from the precursor. The SCP domain occupies 38 to 164 (VDKHNALRRS…SSKYLYVCQY (127 aa)). Zn(2+) is bound by residues Thr-51 and Ser-106. 8 cysteine pairs are disulfide-bonded: Cys-75–Cys-153, Cys-92–Cys-165, Cys-148–Cys-162, Cys-184–Cys-191, Cys-187–Cys-196, Cys-200–Cys-233, Cys-209–Cys-227, and Cys-218–Cys-231. In terms of domain architecture, ShKT spans 200–233 (CNYNNDFSNCKSLAKKSKCQTEWIKKKCPASCFC).

As to expression, expressed by the venom gland.

It localises to the secreted. Functionally, blocks olfactory (CNGA2) and retinal (CNGA1) CNG channel currents. Is really less potent that Pseudechetoxin. Does not affect neither depolarization- nor caffeine-induced contraction of smooth muscle. This chain is Cysteine-rich venom protein pseudecin, found in Pseudechis porphyriacus (Red-bellied black snake).